Consider the following 282-residue polypeptide: L-allo-isoleucyltransferase (282 aa).

Cys105 acts as the Acyl-thioester intermediate in catalysis. The 93-residue stretch at 169 to 261 folds into the AB hydrolase-1 domain; it reads HTQSTYTPSD…DGQHHDFVDG (93 aa).

Belongs to the AB hydrolase superfamily.

It catalyses the reaction holo-[CmaD peptidyl-carrier protein] + L-alloisoleucyl-[CmaA peptidyl-carrier protein] = L-alloisoleucyl-[CmaD peptidyl-carrier protein] + holo-[CmaA peptidyl-carrier protein]. Functionally, involved in the biosynthesis of the phytotoxin coronatine (COR). Catalyzes the transfer of the aminoacyl group covalently attached to the pantetheinyl arm of CmaA to the holo-pantetheinyl arm of CmaD. During the shuttling process, CmaE generates a covalent-aminoacyl-S-Cys enzyme intermediate by the action of its donor substrate L-aminoacyl-S-CmaA and delivers it to the sulfhydryl group attached to the phosphopantetheinyl arm on CmaD. The sequence is that of L-allo-isoleucyltransferase from Pseudomonas savastanoi pv. glycinea (Pseudomonas syringae pv. glycinea).